The primary structure comprises 474 residues: MKQTECTTILVGKKASIDGSTMIARSEDGGRVIIPEGFKVVNPEDQPKHYTSVISKQKIDDEDLAETPLRYTSAPDVSGKNGIWGAAGINADNVAMTATETITTNSRIQGVDPILDPSEGGLGEEDFVTLTLPYLHSAFDGVKRVGYLVEKYGTYEMNGMAFSDKDNIWYLETIGGHHWIARRIPDDAYVIAPNRLNIDTFDFDDSENFATASDLKDLIDEYHLNPDREGYNMRHIFGSSTIKDAHYNNPRAWYIHNYFDPDFGGTPADQDQPFICRANRLISIEDIKWAESSHYQDTPYDAYGDQGTPEQKKTFRPIGINRNFETHILQIRNDVPAEIAGVQWLAFGPNTFNSMLPFYTNVTTTPEAWQTTPKFNLNKIFWLNKLTAQLGDTNYRVYGELEDAFEQKSLAQCHKIQHETDKEVKNLSGKELQDKLIAANQKMSDTVYNNTVELLGQMVDEGHGLMTLKYDLLD.

Residue C6 is part of the active site.

Belongs to the peptidase C69 family. In terms of assembly, homooctamer.

The enzyme catalyses an L-aminoacyl-L-amino acid + H2O = 2 an L-alpha-amino acid. Its activity is regulated as follows. Inhibited by Zn(2+), Cu(2+), Ca(2+) and Cd(2+). Functionally, hydrolyzes a wide range of dipeptides but unable to hydrolyze dipeptides containing proline. Highest activity against Met-Ala. This is Dipeptidase A (pepDA) from Lactobacillus helveticus (Lactobacillus suntoryeus).